We begin with the raw amino-acid sequence, 581 residues long: MKSHTQSLLAESLNALKQQGIVPADFEARIQVDRTKDKSHGDFATNLAMMLTKAAGKNPREIAQLLIDNLPESAHVEKVEIAGPGFINFFIDDNALANQLMVALNSDHLGLELPTPQTVVVDYSSPNLAKEMHVGHLRSTIIGDSVVRALEFMGHKVIRQNHVGDWGTQFGMLLAYMEELRAANGEQAKMELSDLENFYRAAKVRFDESAEFATRARKLVVELQSGDEYCNKLWREFNDISLSHCHELYERLGVSLTRADVRGESAYNSDLAQVVADLDAQGLLSESNGAKVVFQDEFKNKEGEPLPVIIQKADGGYLYATSDLAAMRYRSNVLNADRALYFVDLRQALHFQQVFKLAKTAKFVREEMSFEHMGFGTMNGEDGRPFKTRSGGVVKLIDLLKEADTRALDLVRSKNPDMDEAELAEIARVVGIASVKYADLSKNRASDYIFSFEQMLSFEGNTAPYLLYAYTRVAGIFKRAQDVDLSDATIILEHEKEKDLGTKLAQFGEVMTRMVGKGQPHALCGYLFELAGAFSSFYEACPVLAAETEESKKSRLLLSQLTAKTLKQGLNLLGLETLERM.

The short motif at 126 to 136 is the 'HIGH' region element; the sequence is PNLAKEMHVGH.

It belongs to the class-I aminoacyl-tRNA synthetase family. Monomer.

Its subcellular location is the cytoplasm. The enzyme catalyses tRNA(Arg) + L-arginine + ATP = L-arginyl-tRNA(Arg) + AMP + diphosphate. The polypeptide is Arginine--tRNA ligase (Shewanella halifaxensis (strain HAW-EB4)).